The chain runs to 1048 residues: Putative truncated guanine nucleotide exchange factor SDC25 (1048 aa).

Disordered stretches follow at residues 208-242 and 419-444; these read SKQG…VSGS and LNLD…DEYE. The segment covering 212–224 has biased composition (low complexity); it reads TSCSSETSHHSPS. Residues 578–710 form the N-terminal Ras-GEF domain; it reads SNNRIKGGSK…LLKEVNQKFK (133 aa). The Ras-GEF domain occupies 748–995; sequence DPVLFATQLT…YQLSLIIEPK (248 aa). The tract at residues 997–1048 is disordered; it reads RKKVVPNSNSNNKSQEKSRDDQTDEGKTSTKKDRFPKFQLHKTKKKAPKVSK. Residues 1010–1032 are compositionally biased toward basic and acidic residues; the sequence is SQEKSRDDQTDEGKTSTKKDRFP. Basic residues predominate over residues 1035–1048; sequence QLHKTKKKAPKVSK.

Promotes the exchange of Ras-bound GDP by GTP. The chain is Putative truncated guanine nucleotide exchange factor SDC25 (SDC25) from Saccharomyces cerevisiae (strain ATCC 204508 / S288c) (Baker's yeast).